Here is a 734-residue protein sequence, read N- to C-terminus: Photosystem I P700 chlorophyll a apoprotein A2 (734 aa).

8 helical membrane passes run 46 to 69 (IFAS…FHVA), 135 to 158 (LYTG…LHLQ), 175 to 199 (LNHH…HVAI), 273 to 291 (MAHH…GHMY), 330 to 353 (IHFQ…QHMY), 369 to 395 (AALY…IFFI), 417 to 439 (AIIS…LYVH), and 517 to 535 (FLVH…LILV). [4Fe-4S] cluster is bound by residues cysteine 559 and cysteine 568. Helical transmembrane passes span 575 to 596 (AFYL…YWHW) and 643 to 665 (LSVW…MFLI). Histidine 654, methionine 662, and tyrosine 670 together coordinate chlorophyll a. Residue tryptophan 671 coordinates phylloquinone. The helical transmembrane segment at 707-727 (LVGLAHFSVGYIFTYAAFLIA) threads the bilayer.

The protein belongs to the PsaA/PsaB family. In terms of assembly, the PsaA/B heterodimer binds the P700 chlorophyll special pair and subsequent electron acceptors. PSI consists of a core antenna complex that captures photons, and an electron transfer chain that converts photonic excitation into a charge separation. The eukaryotic PSI reaction center is composed of at least 11 subunits. Requires P700 is a chlorophyll a/chlorophyll a' dimer, A0 is one or more chlorophyll a, A1 is one or both phylloquinones and FX is a shared 4Fe-4S iron-sulfur center. as cofactor.

It localises to the plastid. Its subcellular location is the chloroplast thylakoid membrane. It carries out the reaction reduced [plastocyanin] + hnu + oxidized [2Fe-2S]-[ferredoxin] = oxidized [plastocyanin] + reduced [2Fe-2S]-[ferredoxin]. In terms of biological role, psaA and PsaB bind P700, the primary electron donor of photosystem I (PSI), as well as the electron acceptors A0, A1 and FX. PSI is a plastocyanin-ferredoxin oxidoreductase, converting photonic excitation into a charge separation, which transfers an electron from the donor P700 chlorophyll pair to the spectroscopically characterized acceptors A0, A1, FX, FA and FB in turn. Oxidized P700 is reduced on the lumenal side of the thylakoid membrane by plastocyanin. This is Photosystem I P700 chlorophyll a apoprotein A2 from Draba nemorosa (Woodland whitlowgrass).